The sequence spans 101 residues: DNA-binding protein Fis (101 aa).

Positions 77–96 form a DNA-binding region, H-T-H motif; it reads QTRAANMLGINRGTLRKKLK.

The protein belongs to the transcriptional regulatory Fis family. As to quaternary structure, homodimer.

Functionally, activates ribosomal RNA transcription. Plays a direct role in upstream activation of rRNA promoters. In Shewanella frigidimarina (strain NCIMB 400), this protein is DNA-binding protein Fis.